Reading from the N-terminus, the 255-residue chain is Taurine import ATP-binding protein TauB (255 aa).

Residues 2 to 229 (LNVSGLWAEY…RYAEGEPCRA (228 aa)) form the ABC transporter domain. ATP is bound at residue 34–41 (GPSGCGKT).

The protein belongs to the ABC transporter superfamily. Taurine importer (TC 3.A.1.17.1) family. As to quaternary structure, the complex is composed of two ATP-binding proteins (TauB), two transmembrane proteins (TauC) and a solute-binding protein (TauA).

The protein localises to the cell inner membrane. It carries out the reaction taurine(out) + ATP + H2O = taurine(in) + ADP + phosphate + H(+). In terms of biological role, part of the ABC transporter complex TauABC involved in taurine import. Responsible for energy coupling to the transport system. The sequence is that of Taurine import ATP-binding protein TauB from Yersinia pseudotuberculosis serotype I (strain IP32953).